We begin with the raw amino-acid sequence, 226 residues long: Probable peroxiredoxin prdx-3 (226 aa).

Residues 33–191 (LGPKNTVPAF…TLRVLKAFQF (159 aa)) enclose the Thioredoxin domain. The active-site Cysteine sulfenic acid (-SOH) intermediate is Cys78.

This sequence belongs to the peroxiredoxin family. AhpC/Prx1 subfamily. Homodimer; disulfide-linked, upon oxidation.

It catalyses the reaction a hydroperoxide + [thioredoxin]-dithiol = an alcohol + [thioredoxin]-disulfide + H2O. Its function is as follows. Thiol-specific peroxidase that catalyzes the reduction of hydrogen peroxide and organic hydroperoxides to water and alcohols, respectively. Plays a role in cell protection against oxidative stress by detoxifying peroxides and as sensor of hydrogen peroxide-mediated signaling events. This chain is Probable peroxiredoxin prdx-3 (prdx-3), found in Caenorhabditis elegans.